Here is a 356-residue protein sequence, read N- to C-terminus: Putative zinc finger protein At1g68190 (356 aa).

8 residues coordinate Zn(2+): cysteine 14, cysteine 17, cysteine 37, histidine 42, cysteine 57, cysteine 60, cysteine 80, and histidine 85. A B box-type 1; atypical zinc finger spans residues cysteine 14–leucine 56. The B box-type 2; atypical zinc-finger motif lies at cysteine 57–leucine 97. Positions glutamate 159–lysine 178 are disordered.

Belongs to the CONSTANS family.

It is found in the nucleus. This is Putative zinc finger protein At1g68190 from Arabidopsis thaliana (Mouse-ear cress).